Reading from the N-terminus, the 305-residue chain is Acetaldehyde dehydrogenase (305 aa).

S13–I16 lines the NAD(+) pocket. The active-site Acyl-thioester intermediate is C128. NAD(+)-binding positions include S159–N167 and N278.

It belongs to the acetaldehyde dehydrogenase family.

It carries out the reaction acetaldehyde + NAD(+) + CoA = acetyl-CoA + NADH + H(+). The polypeptide is Acetaldehyde dehydrogenase (Chloroflexus aurantiacus (strain ATCC 29366 / DSM 635 / J-10-fl)).